Reading from the N-terminus, the 338-residue chain is Formimidoylglutamase (338 aa).

Positions 137, 166, 168, 170, 259, and 261 each coordinate Mn(2+).

Belongs to the arginase family. The cofactor is Mn(2+).

The catalysed reaction is N-formimidoyl-L-glutamate + H2O = formamide + L-glutamate. It functions in the pathway amino-acid degradation; L-histidine degradation into L-glutamate; L-glutamate from N-formimidoyl-L-glutamate (hydrolase route): step 1/1. Functionally, catalyzes the conversion of N-formimidoyl-L-glutamate to L-glutamate and formamide. In Clostridium tetani (strain Massachusetts / E88), this protein is Formimidoylglutamase.